A 458-amino-acid chain; its full sequence is Flavohemoprotein (458 aa).

One can recognise a Globin domain in the interval threonine 2–glutamate 158. Histidine 107 lines the heme b pocket. Residues tyrosine 117 and glutamate 157 each act as charge relay system in the active site. Residues glycine 169–serine 457 are reductase. Residues arginine 172–arginine 279 enclose the FAD-binding FR-type domain. FAD contacts are provided by residues tyrosine 211 and arginine 228–serine 231. Glycine 321–proline 326 is a binding site for NADP(+). Residue methionine 450–proline 453 participates in FAD binding.

This sequence belongs to the globin family. Two-domain flavohemoproteins subfamily. In the C-terminal section; belongs to the flavoprotein pyridine nucleotide cytochrome reductase family. Monomer. The cofactor is heme b. FAD serves as cofactor.

It catalyses the reaction 2 nitric oxide + NADPH + 2 O2 = 2 nitrate + NADP(+) + H(+). It carries out the reaction 2 nitric oxide + NADH + 2 O2 = 2 nitrate + NAD(+) + H(+). Functionally, flavohemoprotein involved in nitric oxide (NO) detoxification in an aerobic process, termed nitric oxide dioxygenase (NOD) reaction that utilizes O(2) and NAD(P)H to convert NO to nitrate, which protects the protozoan parasite from various noxious nitrogen compounds. Therefore, plays a central role in the inducible response to nitrosative stress. May also be involved in O(2) detoxification. In Giardia intestinalis (strain ATCC 50803 / WB clone C6) (Giardia lamblia), this protein is Flavohemoprotein (hmpA).